A 255-amino-acid chain; its full sequence is Serine/threonine-protein phosphatase PP1 (255 aa).

Positions 2, 4, 30, and 62 each coordinate Mn(2+). His63 (proton donor) is an active-site residue. His111 and His186 together coordinate Mn(2+).

It belongs to the PPP phosphatase family. PP-1 subfamily. Mn(2+) serves as cofactor.

It catalyses the reaction O-phospho-L-seryl-[protein] + H2O = L-seryl-[protein] + phosphate. The enzyme catalyses O-phospho-L-threonyl-[protein] + H2O = L-threonyl-[protein] + phosphate. This chain is Serine/threonine-protein phosphatase PP1, found in Brassica napus (Rape).